The following is a 331-amino-acid chain: Rho GTPase-activating protein 5 (331 aa).

Residues 3 to 16 (IGGPTNIRHVAHVT) form the CRIB domain. The Rho-GAP domain occupies 48–225 (VSTESMQLSY…LLKSLTEKTV (178 aa)). The segment covering 227–251 (EREASSSVVDRRCSKEAEDGEKEKD) has biased composition (basic and acidic residues). Residues 227–331 (EREASSSVVD…VQPPICSSNP (105 aa)) form a disordered region. Over residues 252–277 (NEEEEEDEEEEEEEEDEDEDEEEEGD) the composition is skewed to acidic residues.

Expressed in differentiating xylem cells.

It is found in the cell membrane. Its function is as follows. Acts as a GTPase activator for the Rac-type GTPase by converting it to an inactive GDP-bound state. This is Rho GTPase-activating protein 5 (ROPGAP5) from Arabidopsis thaliana (Mouse-ear cress).